The sequence spans 150 residues: Phosphoribosyl-AMP cyclohydrolase (150 aa).

Asp-93 serves as a coordination point for Mg(2+). Residue Cys-94 coordinates Zn(2+). The Mg(2+) site is built by Asp-95 and Asp-97. Positions 112 and 119 each coordinate Zn(2+).

The protein belongs to the PRA-CH family. In terms of assembly, homodimer. Requires Mg(2+) as cofactor. It depends on Zn(2+) as a cofactor.

It localises to the cytoplasm. The catalysed reaction is 1-(5-phospho-beta-D-ribosyl)-5'-AMP + H2O = 1-(5-phospho-beta-D-ribosyl)-5-[(5-phospho-beta-D-ribosylamino)methylideneamino]imidazole-4-carboxamide. Its pathway is amino-acid biosynthesis; L-histidine biosynthesis; L-histidine from 5-phospho-alpha-D-ribose 1-diphosphate: step 3/9. Catalyzes the hydrolysis of the adenine ring of phosphoribosyl-AMP. This Rhizobium leguminosarum bv. trifolii (strain WSM2304) protein is Phosphoribosyl-AMP cyclohydrolase.